The sequence spans 271 residues: Putative phosphoenolpyruvate synthase regulatory protein (271 aa).

152–159 serves as a coordination point for ADP; it reads GVSRCGKT.

Belongs to the pyruvate, phosphate/water dikinase regulatory protein family. PSRP subfamily.

The catalysed reaction is [pyruvate, water dikinase] + ADP = [pyruvate, water dikinase]-phosphate + AMP + H(+). It catalyses the reaction [pyruvate, water dikinase]-phosphate + phosphate + H(+) = [pyruvate, water dikinase] + diphosphate. Functionally, bifunctional serine/threonine kinase and phosphorylase involved in the regulation of the phosphoenolpyruvate synthase (PEPS) by catalyzing its phosphorylation/dephosphorylation. The sequence is that of Putative phosphoenolpyruvate synthase regulatory protein from Legionella pneumophila (strain Paris).